A 506-amino-acid chain; its full sequence is Beta-glucosidase 9 (506 aa).

Positions M1 to A22 are cleaved as a signal peptide. A beta-D-glucoside-binding positions include Q42, H139, and N184–E185. The active-site Proton donor is E185. A disulfide bond links C204 and C212. Residues N211 and N216 are each glycosylated (N-linked (GlcNAc...) asparagine). Position 328 (Y328) interacts with a beta-D-glucoside. An N-linked (GlcNAc...) asparagine glycan is attached at N363. E396 contacts a beta-D-glucoside. The active-site Nucleophile is E396. N429 is a glycosylation site (N-linked (GlcNAc...) asparagine). 2 residues coordinate a beta-D-glucoside: W439 and F455. N-linked (GlcNAc...) asparagine glycosylation is found at N461, N483, and N499.

This sequence belongs to the glycosyl hydrolase 1 family.

The enzyme catalyses Hydrolysis of terminal, non-reducing beta-D-glucosyl residues with release of beta-D-glucose.. The protein is Beta-glucosidase 9 of Arabidopsis thaliana (Mouse-ear cress).